The sequence spans 186 residues: Elongation factor P (186 aa).

It belongs to the elongation factor P family.

It localises to the cytoplasm. The protein operates within protein biosynthesis; polypeptide chain elongation. Its function is as follows. Involved in peptide bond synthesis. Stimulates efficient translation and peptide-bond synthesis on native or reconstituted 70S ribosomes in vitro. Probably functions indirectly by altering the affinity of the ribosome for aminoacyl-tRNA, thus increasing their reactivity as acceptors for peptidyl transferase. This chain is Elongation factor P, found in Neisseria gonorrhoeae (strain NCCP11945).